The primary structure comprises 362 residues: 3-dehydroquinate synthase (362 aa).

Residues 71–76, 105–109, 129–130, K142, K151, and 169–172 each bind NAD(+); these read DGEQYK, GVVGD, TT, and CLKT. Zn(2+) is bound by residues E184, H247, and H264.

This sequence belongs to the sugar phosphate cyclases superfamily. Dehydroquinate synthase family. Co(2+) is required as a cofactor. It depends on Zn(2+) as a cofactor. Requires NAD(+) as cofactor.

It is found in the cytoplasm. It catalyses the reaction 7-phospho-2-dehydro-3-deoxy-D-arabino-heptonate = 3-dehydroquinate + phosphate. It functions in the pathway metabolic intermediate biosynthesis; chorismate biosynthesis; chorismate from D-erythrose 4-phosphate and phosphoenolpyruvate: step 2/7. Its function is as follows. Catalyzes the conversion of 3-deoxy-D-arabino-heptulosonate 7-phosphate (DAHP) to dehydroquinate (DHQ). The sequence is that of 3-dehydroquinate synthase from Escherichia coli O6:K15:H31 (strain 536 / UPEC).